The sequence spans 523 residues: Spastin (523 aa).

Over 1-41 the chain is Cytoplasmic; sequence MLDKLSKHKTMFYERVKEIDQILFSQQQAKQTQLDNLSNNN. The segment at residues 42–58 is an intramembrane region (helical); the sequence is ASGGFFSGFMKMFSPLS. Composition is skewed to low complexity over residues 57–71, 171–184, and 193–210; these read LSTP…NSNT, QQPP…QQQP, and TALR…TANN. 2 disordered regions span residues 57-77 and 129-218; these read LSTP…AISQ and GISS…LDQI. Topologically, residues 59–523 are cytoplasmic; it reads TPPNSSSNNN…ESYGTFAKGI (465 aa).

It belongs to the AAA ATPase family. Spastin subfamily. Homohexamer. The homohexamer is stabilized by ATP-binding. The homohexamer may adopt a ring conformation through which microtubules pass prior to being severed.

The protein resides in the membrane. The enzyme catalyses n ATP + n H2O + a microtubule = n ADP + n phosphate + (n+1) alpha/beta tubulin heterodimers.. Its function is as follows. ATP-dependent microtubule severing protein. Stimulates microtubule minus-end depolymerization and poleward microtubule flux in the mitotic spindle. The protein is Spastin of Naegleria gruberi (Amoeba).